We begin with the raw amino-acid sequence, 1057 residues long: Carbamoyl phosphate synthase large chain (1057 aa).

The tract at residues 1–401 (MPKREDINKI…ATQKAIRSLD (401 aa)) is carboxyphosphate synthetic domain. The ATP site is built by arginine 129, arginine 169, glycine 175, glycine 176, glutamine 208, isoleucine 210, glutamate 215, glycine 241, isoleucine 242, histidine 243, glutamine 284, and glutamate 298. One can recognise an ATP-grasp 1 domain in the interval 133–327 (RALMNDLNEP…IAKVAAKIAV (195 aa)). Glutamine 284, glutamate 298, and asparagine 300 together coordinate Mg(2+). Residues glutamine 284, glutamate 298, and asparagine 300 each coordinate Mn(2+). Residues 402 to 546 (IDINYIGDEE…YSTYELENES (145 aa)) form an oligomerization domain region. A carbamoyl phosphate synthetic domain region spans residues 547-929 (IVSNRKSIVV…ALYKAFEGAK (383 aa)). The 191-residue stretch at 671–861 (NKLIQANGIR…MARLATRAIL (191 aa)) folds into the ATP-grasp 2 domain. ATP contacts are provided by arginine 707, glutamine 746, leucine 748, glutamate 752, glycine 777, valine 778, histidine 779, serine 780, glutamine 820, and glutamate 832. The Mg(2+) site is built by glutamine 820, glutamate 832, and asparagine 834. Mn(2+) contacts are provided by glutamine 820, glutamate 832, and asparagine 834. One can recognise an MGS-like domain in the interval 930 to 1057 (MHMPDHGKVL…ESQAFTTLHL (128 aa)). The tract at residues 930-1057 (MHMPDHGKVL…ESQAFTTLHL (128 aa)) is allosteric domain.

The protein belongs to the CarB family. In terms of assembly, composed of two chains; the small (or glutamine) chain promotes the hydrolysis of glutamine to ammonia, which is used by the large (or ammonia) chain to synthesize carbamoyl phosphate. Tetramer of heterodimers (alpha,beta)4. It depends on Mg(2+) as a cofactor. The cofactor is Mn(2+).

The enzyme catalyses hydrogencarbonate + L-glutamine + 2 ATP + H2O = carbamoyl phosphate + L-glutamate + 2 ADP + phosphate + 2 H(+). It carries out the reaction hydrogencarbonate + NH4(+) + 2 ATP = carbamoyl phosphate + 2 ADP + phosphate + 2 H(+). The protein operates within amino-acid biosynthesis; L-arginine biosynthesis; carbamoyl phosphate from bicarbonate: step 1/1. It functions in the pathway pyrimidine metabolism; UMP biosynthesis via de novo pathway; (S)-dihydroorotate from bicarbonate: step 1/3. Large subunit of the glutamine-dependent carbamoyl phosphate synthetase (CPSase). CPSase catalyzes the formation of carbamoyl phosphate from the ammonia moiety of glutamine, carbonate, and phosphate donated by ATP, constituting the first step of 2 biosynthetic pathways, one leading to arginine and/or urea and the other to pyrimidine nucleotides. The large subunit (synthetase) binds the substrates ammonia (free or transferred from glutamine from the small subunit), hydrogencarbonate and ATP and carries out an ATP-coupled ligase reaction, activating hydrogencarbonate by forming carboxy phosphate which reacts with ammonia to form carbamoyl phosphate. The chain is Carbamoyl phosphate synthase large chain from Pediococcus pentosaceus (strain ATCC 25745 / CCUG 21536 / LMG 10740 / 183-1w).